Consider the following 684-residue polypeptide: DNA-directed RNA polymerase subunit beta' (684 aa).

4 residues coordinate Zn(2+): C69, C71, C87, and C90. Positions 489, 491, and 493 each coordinate Mg(2+).

It belongs to the RNA polymerase beta' chain family. RpoC1 subfamily. In plastids the minimal PEP RNA polymerase catalytic core is composed of four subunits: alpha, beta, beta', and beta''. When a (nuclear-encoded) sigma factor is associated with the core the holoenzyme is formed, which can initiate transcription. Mg(2+) is required as a cofactor. Requires Zn(2+) as cofactor.

The protein resides in the plastid. The protein localises to the chloroplast. It carries out the reaction RNA(n) + a ribonucleoside 5'-triphosphate = RNA(n+1) + diphosphate. Its function is as follows. DNA-dependent RNA polymerase catalyzes the transcription of DNA into RNA using the four ribonucleoside triphosphates as substrates. This is DNA-directed RNA polymerase subunit beta' from Morus indica (Mulberry).